A 612-amino-acid polypeptide reads, in one-letter code: UvrABC system protein C (612 aa).

A GIY-YIG domain is found at Thr-20 to Ile-98. A UVR domain is found at Ser-208–Leu-243.

It belongs to the UvrC family. In terms of assembly, interacts with UvrB in an incision complex.

It is found in the cytoplasm. In terms of biological role, the UvrABC repair system catalyzes the recognition and processing of DNA lesions. UvrC both incises the 5' and 3' sides of the lesion. The N-terminal half is responsible for the 3' incision and the C-terminal half is responsible for the 5' incision. This is UvrABC system protein C from Francisella philomiragia subsp. philomiragia (strain ATCC 25017 / CCUG 19701 / FSC 153 / O#319-036).